The following is an 81-amino-acid chain: Small ribosomal subunit protein bS16 (81 aa).

This sequence belongs to the bacterial ribosomal protein bS16 family.

This chain is Small ribosomal subunit protein bS16, found in Coprothermobacter proteolyticus (strain ATCC 35245 / DSM 5265 / OCM 4 / BT).